Here is a 371-residue protein sequence, read N- to C-terminus: Forkhead box protein J1.2 (371 aa).

Disordered regions lie at residues 45-74 (ANSR…APRT) and 80-99 (VAVP…PVQE). The segment at residues 109–203 (KPPYSYATLI…VNGVLKRRRM (95 aa)) is a DNA-binding region (fork-head). The segment at 228 to 248 (PSSHHMQHISGGHRQSRRYEK) is disordered.

This sequence belongs to the FOXJ1 family. Expressed diffusely through much of gastrula and neurula stage embryos. At stage 23 (late neurula), limited to the otic vesicle. By stage 28 (tailbud), also expressed transiently in the presumptive nephrostomes of the pronephros. At stage 35 (early tadpole), expressed broadly in the head and strongly expressed in the developing gill structures.

It is found in the nucleus. Functionally, key transcription factor required for motile ciliogenesis. Activates genes essential for motile cilia formation and function. This Xenopus tropicalis (Western clawed frog) protein is Forkhead box protein J1.2.